The sequence spans 332 residues: Cyclin-D1-binding protein 1 (332 aa).

At Ala2 the chain carries N-acetylalanine. Interaction with TCF3 regions lie at residues 2–184 (ASAT…VDFV) and 150–332 (ISYN…CLLD). Interaction with RPLP0 stretches follow at residues 2 to 190 (ASAT…AHEE) and 240 to 332 (LIIP…CLLD). The interval 2–208 (ASATAPAAAA…DPYSGLLNDT (207 aa)) is required for interaction with CCND1.

The protein belongs to the CCNDBP1 family. Interacts with CCND1 and GRAP2. May also interact with COPS5, RPLP0, SIRT6, SYF2 and TCF3. Post-translationally, phosphorylated.

The protein resides in the cytoplasm. It is found in the nucleus. In terms of biological role, may negatively regulate cell cycle progression. May act at least in part via inhibition of the cyclin-D1/CDK4 complex, thereby preventing phosphorylation of RB1 and blocking E2F-dependent transcription. The sequence is that of Cyclin-D1-binding protein 1 (CCNDBP1) from Macaca fascicularis (Crab-eating macaque).